The chain runs to 375 residues: Alcohol dehydrogenase E chain (375 aa).

Residue S2 is modified to N-acetylserine. Residues C47, S49, H68, C98, C101, C104, C112, and C175 each coordinate Zn(2+). An alcohol contacts are provided by S49 and H68. S49 provides a ligand contact to NAD(+). Residues 200–205 (GLGGVG), D224, K229, V293, 293–295 (VGV), F320, and R370 contribute to the NAD(+) site.

Belongs to the zinc-containing alcohol dehydrogenase family. Class-I subfamily. As to quaternary structure, dimer of identical or non-identical chains of two types (E and S) coded by 2 separate genes at different loci. Zn(2+) serves as cofactor.

It is found in the cytoplasm. The enzyme catalyses a primary alcohol + NAD(+) = an aldehyde + NADH + H(+). The catalysed reaction is a secondary alcohol + NAD(+) = a ketone + NADH + H(+). The protein is Alcohol dehydrogenase E chain of Equus caballus (Horse).